We begin with the raw amino-acid sequence, 629 residues long: Phosphomethylpyrimidine synthase (629 aa).

Residues 1–24 are disordered; sequence MSTKPKNAAHLSESAQVDSGSVQP. The span at 13-24 shows a compositional bias: polar residues; that stretch reads ESAQVDSGSVQP. Residues Asn233, Met262, Tyr291, His327, 347 to 349, 388 to 391, and Glu427 each bind substrate; these read SRG and DGLR. Zn(2+) is bound at residue His431. Tyr454 contacts substrate. His495 is a binding site for Zn(2+). Cys575, Cys578, and Cys583 together coordinate [4Fe-4S] cluster.

Belongs to the ThiC family. As to quaternary structure, homodimer. It depends on [4Fe-4S] cluster as a cofactor.

The catalysed reaction is 5-amino-1-(5-phospho-beta-D-ribosyl)imidazole + S-adenosyl-L-methionine = 4-amino-2-methyl-5-(phosphooxymethyl)pyrimidine + CO + 5'-deoxyadenosine + formate + L-methionine + 3 H(+). It functions in the pathway cofactor biosynthesis; thiamine diphosphate biosynthesis. Catalyzes the synthesis of the hydroxymethylpyrimidine phosphate (HMP-P) moiety of thiamine from aminoimidazole ribotide (AIR) in a radical S-adenosyl-L-methionine (SAM)-dependent reaction. The protein is Phosphomethylpyrimidine synthase of Pseudomonas syringae pv. tomato (strain ATCC BAA-871 / DC3000).